A 181-amino-acid chain; its full sequence is Probable pyruvoyl-dependent arginine decarboxylase (181 aa).

Position 43 is a pyruvic acid (Ser) (serine 43).

Belongs to the PdaD family. Pyruvate is required as a cofactor.

The catalysed reaction is L-arginine + H(+) = agmatine + CO2. The protein is Probable pyruvoyl-dependent arginine decarboxylase of Chlorobaculum tepidum (strain ATCC 49652 / DSM 12025 / NBRC 103806 / TLS) (Chlorobium tepidum).